A 321-amino-acid chain; its full sequence is Tyrosine recombinase XerC (321 aa).

The 92-residue stretch at 16–107 (SDIGQQIVRW…GLRSFARFLE (92 aa)) folds into the Core-binding (CB) domain. The region spanning 128-315 (SVPKPIHMSA…DSERLLDVYR (188 aa)) is the Tyr recombinase domain. Residues arginine 173, lysine 199, histidine 267, arginine 270, and histidine 293 contribute to the active site. The active-site O-(3'-phospho-DNA)-tyrosine intermediate is tyrosine 302.

The protein belongs to the 'phage' integrase family. XerC subfamily. In terms of assembly, forms a cyclic heterotetrameric complex composed of two molecules of XerC and two molecules of XerD.

Its subcellular location is the cytoplasm. Functionally, site-specific tyrosine recombinase, which acts by catalyzing the cutting and rejoining of the recombining DNA molecules. The XerC-XerD complex is essential to convert dimers of the bacterial chromosome into monomers to permit their segregation at cell division. It also contributes to the segregational stability of plasmids. The polypeptide is Tyrosine recombinase XerC (Nitrobacter winogradskyi (strain ATCC 25391 / DSM 10237 / CIP 104748 / NCIMB 11846 / Nb-255)).